Reading from the N-terminus, the 482-residue chain is UDP-N-acetylmuramate--L-alanine ligase (482 aa).

123 to 129 lines the ATP pocket; that stretch reads GTHGKTT.

This sequence belongs to the MurCDEF family.

It is found in the cytoplasm. It catalyses the reaction UDP-N-acetyl-alpha-D-muramate + L-alanine + ATP = UDP-N-acetyl-alpha-D-muramoyl-L-alanine + ADP + phosphate + H(+). Its pathway is cell wall biogenesis; peptidoglycan biosynthesis. Cell wall formation. The polypeptide is UDP-N-acetylmuramate--L-alanine ligase (Pseudomonas putida (strain GB-1)).